Consider the following 171-residue polypeptide: Ribosome maturation factor RimM (171 aa).

One can recognise a PRC barrel domain in the interval 97–170 (EGEYYYHEII…LVTIHVMEGL (74 aa)).

The protein belongs to the RimM family. In terms of assembly, binds ribosomal protein uS19.

It is found in the cytoplasm. Functionally, an accessory protein needed during the final step in the assembly of 30S ribosomal subunit, possibly for assembly of the head region. Essential for efficient processing of 16S rRNA. May be needed both before and after RbfA during the maturation of 16S rRNA. It has affinity for free ribosomal 30S subunits but not for 70S ribosomes. The polypeptide is Ribosome maturation factor RimM (Bacillus cereus (strain ZK / E33L)).